The chain runs to 162 residues: Nucleotide-binding protein SGR_2909 (162 aa).

The protein belongs to the YajQ family.

Nucleotide-binding protein. This is Nucleotide-binding protein SGR_2909 from Streptomyces griseus subsp. griseus (strain JCM 4626 / CBS 651.72 / NBRC 13350 / KCC S-0626 / ISP 5235).